Consider the following 409-residue polypeptide: Elongation factor Tu (409 aa).

Residues 10 to 214 (KPHVNIGTIG…AVDDNIPEPE (205 aa)) form the tr-type G domain. Residues 19–26 (GHVDHGKT) are G1. 19–26 (GHVDHGKT) contacts GTP. A Mg(2+)-binding site is contributed by Thr-26. Positions 60 to 64 (GITIN) are G2. A G3 region spans residues 81-84 (DCPG). GTP-binding positions include 81-85 (DCPGH) and 136-139 (NKKD). Residues 136 to 139 (NKKD) are G4. A G5 region spans residues 174–176 (SAL).

The protein belongs to the TRAFAC class translation factor GTPase superfamily. Classic translation factor GTPase family. EF-Tu/EF-1A subfamily. Monomer.

It is found in the cytoplasm. It carries out the reaction GTP + H2O = GDP + phosphate + H(+). In terms of biological role, GTP hydrolase that promotes the GTP-dependent binding of aminoacyl-tRNA to the A-site of ribosomes during protein biosynthesis. The chain is Elongation factor Tu from Crocosphaera subtropica (strain ATCC 51142 / BH68) (Cyanothece sp. (strain ATCC 51142)).